Consider the following 366-residue polypeptide: Peptide chain release factor 2 (366 aa).

Glutamine 251 carries the N5-methylglutamine modification.

Belongs to the prokaryotic/mitochondrial release factor family. Methylated by PrmC. Methylation increases the termination efficiency of RF2.

The protein localises to the cytoplasm. Peptide chain release factor 2 directs the termination of translation in response to the peptide chain termination codons UGA and UAA. The chain is Peptide chain release factor 2 (prfB) from Listeria monocytogenes serotype 4b (strain F2365).